The primary structure comprises 102 residues: Thioredoxin (102 aa).

A Thioredoxin domain is found at 2 to 102 (LHIDELTFEN…ILIHTINKYL (101 aa)). Active-site nucleophile residues include Cys-29 and Cys-32. The cysteines at positions 29 and 32 are disulfide-linked.

The protein belongs to the thioredoxin family.

It localises to the plastid. The protein resides in the chloroplast. Participates in various redox reactions through the reversible oxidation of its active center dithiol to a disulfide and catalyzes dithiol-disulfide exchange reactions. This Cyanidioschyzon merolae (strain NIES-3377 / 10D) (Unicellular red alga) protein is Thioredoxin (trxA).